A 400-amino-acid polypeptide reads, in one-letter code: Phosphoglycerate kinase (400 aa).

Substrate is bound by residues 19-21, Arg38, 61-64, Arg124, and Arg161; these read DLN and HLGR. Residues Lys211, Gly299, Glu330, and 356 to 359 contribute to the ATP site; that span reads GGDS.

Belongs to the phosphoglycerate kinase family. In terms of assembly, monomer.

Its subcellular location is the cytoplasm. The enzyme catalyses (2R)-3-phosphoglycerate + ATP = (2R)-3-phospho-glyceroyl phosphate + ADP. Its pathway is carbohydrate degradation; glycolysis; pyruvate from D-glyceraldehyde 3-phosphate: step 2/5. The polypeptide is Phosphoglycerate kinase (Frankia alni (strain DSM 45986 / CECT 9034 / ACN14a)).